A 750-amino-acid chain; its full sequence is MIIRSPEPEVKILVDRDPIKTSFEEWAKPGHFSRTIAKGPDTTTWIWNLHADAHDFDSHTNDLEEISRKVFSAHFGQLSIIFLWLSGMYFHGARFSNYEAWLSDPTHIRPSAQVVWPIVGQEILNGDVGGGFRGIQITSGFFQIWRASGITNELQLYCTAIGALVFAALMLFAGWFHYHKAAPKLAWFQDVESMLNHHLTGLLGLGSLSWAGHQIHVSLPINQFLNAAVDPKEIPLPHEFILNRDLLAQLYPSFAEGATPFFTLNWSKYGEFLTFRGGLDPVTGGLWLTDIIHHHLAIAILFLIAGHMYRTNWGIGHSIKDILEAHKGPFTGQGHKGLYEILTTSWHAQLSINLAMLGSLTIVVAHHMYSMPPYPYLATDYGTQLSLFTHHMWIGGFLIVGAAAHAAIFMVRDYDPTIRYNDLLDRVLRHRDAIISHLNWVCIFLGFHSFGLYIHNDTMSALGRPQDMFSDTAIQLQPIFAQWIQNTHALAPGTTAPGAATSTSLTWGGENLVAVGGKVALLPIPLGTADFLVHHIHAFTIHVTVLILLKGVLFARSSRLIPDKANLGFRFPCDGPGRGGTCQVSAWDHVFLGLFWMYNSISVVIFHFSWKMQSDVWGSISDQGIVTHITGGNFAQSSITINGWLRDFLWAQASQVIQSYGSSLSAYGLFFLGAHFVWAFSLMFLFSGRGYWQELIESIVWAHNKLKVAPATQPRALSIVQGRAVGVTHYLLGGIATTWAFFLARIIAVG.

The next 8 helical transmembrane spans lie at Val-70–Ala-93, Leu-156–His-179, Leu-195–Leu-219, Ile-291–Tyr-309, Trp-346–Tyr-369, Leu-385–Val-411, Ala-433–His-455, and Phe-531–Leu-549. Residues Cys-573 and Cys-582 each coordinate [4Fe-4S] cluster. 2 helical membrane-spanning segments follow: residues His-589–Trp-610 and Leu-664–Phe-686. Residue His-675 participates in chlorophyll a' binding. Residues Met-683 and Tyr-691 each coordinate chlorophyll a. Phylloquinone is bound at residue Trp-692. Residues Ala-724–Ala-744 traverse the membrane as a helical segment.

The protein belongs to the PsaA/PsaB family. As to quaternary structure, the PsaA/B heterodimer binds the P700 chlorophyll special pair and subsequent electron acceptors. PSI consists of a core antenna complex that captures photons, and an electron transfer chain that converts photonic excitation into a charge separation. The eukaryotic PSI reaction center is composed of at least 11 subunits. Requires P700 is a chlorophyll a/chlorophyll a' dimer, A0 is one or more chlorophyll a, A1 is one or both phylloquinones and FX is a shared 4Fe-4S iron-sulfur center. as cofactor.

It is found in the plastid. It localises to the chloroplast thylakoid membrane. The enzyme catalyses reduced [plastocyanin] + hnu + oxidized [2Fe-2S]-[ferredoxin] = oxidized [plastocyanin] + reduced [2Fe-2S]-[ferredoxin]. Functionally, psaA and PsaB bind P700, the primary electron donor of photosystem I (PSI), as well as the electron acceptors A0, A1 and FX. PSI is a plastocyanin-ferredoxin oxidoreductase, converting photonic excitation into a charge separation, which transfers an electron from the donor P700 chlorophyll pair to the spectroscopically characterized acceptors A0, A1, FX, FA and FB in turn. Oxidized P700 is reduced on the lumenal side of the thylakoid membrane by plastocyanin. The protein is Photosystem I P700 chlorophyll a apoprotein A1 of Phaseolus vulgaris (Kidney bean).